The sequence spans 781 residues: N-acetylneuraminate (7)9-O-acetyltransferase (781 aa).

The Cytoplasmic portion of the chain corresponds to M1–Q15. The chain crosses the membrane as a helical span at residues Y16 to F36. Topologically, residues H37–K308 are lumenal. Residue S94 is the Acyl-ester intermediate of the active site. N-linked (GlcNAc...) asparagine glycans are attached at residues N139, N185, and N239. Catalysis depends on residues D264 and H267. Residues L309–H329 traverse the membrane as a helical segment. The interval R330–V350 is disordered. Residues R330–N354 are Cytoplasmic-facing. A helical membrane pass occupies residues P355–C375. Residues D376–K386 lie on the Lumenal side of the membrane. Residues F387–Y407 traverse the membrane as a helical segment. Topologically, residues S408–Q430 are cytoplasmic. Residues L431 to V451 form a helical membrane-spanning segment. Residue R452 is a topological domain, lumenal. A helical transmembrane segment spans residues V453–K473. At G474 to G477 the chain is on the cytoplasmic side. A helical transmembrane segment spans residues L478–V498. Over M499–Q504 the chain is Lumenal. The chain crosses the membrane as a helical span at residues F505–L525. Topologically, residues W526–S537 are cytoplasmic. A helical transmembrane segment spans residues A538–F558. Over A559–R595 the chain is Lumenal. A helical membrane pass occupies residues F596–L616. Over L617–K629 the chain is Cytoplasmic. Residues I630–S650 form a helical membrane-spanning segment. Topologically, residues G651–E660 are lumenal. Residue N654 is glycosylated (N-linked (GlcNAc...) asparagine). The chain crosses the membrane as a helical span at residues M661–A681. Over R682–S687 the chain is Cytoplasmic. The chain crosses the membrane as a helical span at residues F688–L708. The Lumenal segment spans residues A709–G714. A helical membrane pass occupies residues I715–V735. Residues C736–E756 are Cytoplasmic-facing. The helical transmembrane segment at S757–L777 threads the bilayer. Residues S778–D781 lie on the Lumenal side of the membrane.

It belongs to the PC-esterase family. CASD1 subfamily.

Its subcellular location is the golgi apparatus membrane. It carries out the reaction CMP-N-acetyl-beta-neuraminate + acetyl-CoA = CMP-N-acetyl-9-O-acetyl-beta-neuraminate + CoA. The catalysed reaction is a ganglioside GD3 (d18:1(4E)) + acetyl-CoA = a ganglioside Ac-O-7-GD3(d18:1(4E)) + CoA. It catalyses the reaction CMP-N-acetyl-beta-neuraminate + acetyl-CoA = CMP-N-acetyl-7-O-acetyl-beta-neuraminate + CoA. In terms of biological role, key enzyme in the biosynthesis of O-acetylated (O-Ac) sialoglycans such as gangliosides O-AcGD3 and O-AcGD2, which affect various processes such as cell-cell interactions, host-pathogen recognition. Catalyzes the transfer of an acetyl group from a donor, the acetyl-coenzyme-A molecule (acetyl-CoA), to the C7/8/9 OH-position of a sialic acid residue. The primary site of O-acetyl group transfer on sialic acid seems to depend on cell type and can be C7, from which the O-acetyl group could subsequently migrate to the C8 and then to the C9 position, or at C9 with possibility of migrating to the C8 and then to the C7 position. Together with ST8SIA1 (GD3 synthase) it increases the levels of ganglioside Ac-O-7-GD3. Can transfer the acetyl group from acetyl-CoA to free sialate (N-acetylneuraminate, Neu5Ac) in vitro, but has preferred substrate specificity for CMP-activated sialate (CMP-Neu5Ac), resulting in the formation of 9-O-acetylated CMP-Neu5Ac (CMP-Neu5,9Ac2). CMP-Neu5,9Ac2 may be used by sialyltransferases as a sialate donor for glycoconjugate acceptors such as ganglioside GD3. O-acetylation at position C9 of ganglioside GD3 can counteract the pro-apoptotic effects of the ganglioside GD3 in tumor cells. The protein is N-acetylneuraminate (7)9-O-acetyltransferase of Danio rerio (Zebrafish).